The sequence spans 268 residues: Undecaprenyl-diphosphatase (268 aa).

Transmembrane regions (helical) follow at residues 41 to 61 (PGPS…VCYF), 89 to 109 (IFIG…FVPY), 114 to 134 (IFRS…LMYI), 155 to 175 (LIGL…GVTI), 191 to 211 (FSFL…FISS), 218 to 238 (FSFF…LLAI), and 248 to 268 (NGLK…LLNL).

It belongs to the UppP family.

Its subcellular location is the cell inner membrane. It catalyses the reaction di-trans,octa-cis-undecaprenyl diphosphate + H2O = di-trans,octa-cis-undecaprenyl phosphate + phosphate + H(+). Catalyzes the dephosphorylation of undecaprenyl diphosphate (UPP). Confers resistance to bacitracin. The chain is Undecaprenyl-diphosphatase from Prochlorococcus marinus (strain MIT 9312).